Reading from the N-terminus, the 446-residue chain is FAD-dependent monooxygenase eupB (446 aa).

The chain crosses the membrane as a helical span at residues 10 to 30; the sequence is EPHIAIVGGGIVGVILTLGLL. The N-linked (GlcNAc...) asparagine glycan is linked to asparagine 33. Positions 40, 53, and 125 each coordinate FAD. Catalysis depends on residues arginine 206 and tyrosine 239. An N-linked (GlcNAc...) asparagine glycan is attached at asparagine 243. FAD is bound by residues aspartate 322 and alanine 335. Residue asparagine 395 is glycosylated (N-linked (GlcNAc...) asparagine).

This sequence belongs to the paxM FAD-dependent monooxygenase family. It depends on FAD as a cofactor.

It is found in the membrane. Its pathway is secondary metabolite biosynthesis; terpenoid biosynthesis. Functionally, FAD-dependent monooxygenase; part of the gene cluster that mediates the biosynthesis of eupenifeldin, a bistropolone meroterpenoid that acts as an antitumor agent. The first step of eupenifeldin biosynthesis is the biosynthesis of 3-methylorcinaldehyde performed by the non-reducing polyketide synthase eupA. Oxidative dearomatization of 3-methylorcinaldehyde likely catalyzed by the FAD-dependent monooxygenase eupB is followed by oxidative ring expansion by the 2-oxoglutarate-dependent dioxygenase eupC to provide the first tropolone metabolite, tropolone stipitaldehyde. In parallel, generation of sesquiterpene alpha-humulene from farnesylpyrophosphate (FPP) is catalyzed by the terpene cyclase eupE. The cytochrome P450 monooxygenase eupD then hydroxylates humulene to humulenol. The putative Diels-Alderase eupF probably catalyzes the formation of the tropolone-humulene skeleton by linking humulenol and the polyketide moiety. The short-chain dehydrogenase/reductase eupG and the flavin-dependent monooxygenase eupH are also essential for eupenifeldin biosynthesis and are likely the additional decorating enzymes of the tropolone-humulene skeleton to produce final eupenifeldin or derivatives. This is FAD-dependent monooxygenase eupB from Phoma sp.